The following is a 288-amino-acid chain: Proteasome subunit beta (288 aa).

The propeptide at 1–57 (MTVDGQVGRWPVSAIPAAYMRPGSGSFTEFLAGAEPHLLPGRAGAQPAGAAPAVPHG) is removed in mature form; by autocatalysis. The active-site Nucleophile is the threonine 58.

Belongs to the peptidase T1B family. The 20S proteasome core is composed of 14 alpha and 14 beta subunits that assemble into four stacked heptameric rings, resulting in a barrel-shaped structure. The two inner rings, each composed of seven catalytic beta subunits, are sandwiched by two outer rings, each composed of seven alpha subunits. The catalytic chamber with the active sites is on the inside of the barrel. Has a gated structure, the ends of the cylinder being occluded by the N-termini of the alpha-subunits. Is capped by the proteasome-associated ATPase, ARC.

The protein resides in the cytoplasm. The catalysed reaction is Cleavage of peptide bonds with very broad specificity.. It functions in the pathway protein degradation; proteasomal Pup-dependent pathway. The formation of the proteasomal ATPase ARC-20S proteasome complex, likely via the docking of the C-termini of ARC into the intersubunit pockets in the alpha-rings, may trigger opening of the gate for substrate entry. Interconversion between the open-gate and close-gate conformations leads to a dynamic regulation of the 20S proteasome proteolysis activity. In terms of biological role, component of the proteasome core, a large protease complex with broad specificity involved in protein degradation. This is Proteasome subunit beta from Nakamurella multipartita (strain ATCC 700099 / DSM 44233 / CIP 104796 / JCM 9543 / NBRC 105858 / Y-104) (Microsphaera multipartita).